A 681-amino-acid chain; its full sequence is Structure-specific endonuclease subunit SLX4 (681 aa).

Disordered regions lie at residues 239-305 (EREK…QEQL) and 505-528 (EVTG…NENL). The span at 251-261 (SDSSPEPTQLL) shows a compositional bias: polar residues. The segment covering 265 to 281 (IIEEEHEVDEEEEDNEN) has biased composition (acidic residues). 2 stretches are compositionally biased toward polar residues: residues 288–305 (QLAS…QEQL) and 518–528 (QVPSSPGNENL).

The protein belongs to the SLX4 family. Forms a heterodimer with SLX1. Phosphorylated in response to DNA damage.

It is found in the nucleus. Its function is as follows. Regulatory subunit of the SLX1-SLX4 structure-specific endonuclease that resolves DNA secondary structures generated during DNA repair and recombination. Has endonuclease activity towards branched DNA substrates, introducing single-strand cuts in duplex DNA close to junctions with ss-DNA. This chain is Structure-specific endonuclease subunit SLX4, found in Meyerozyma guilliermondii (strain ATCC 6260 / CBS 566 / DSM 6381 / JCM 1539 / NBRC 10279 / NRRL Y-324) (Yeast).